Consider the following 164-residue polypeptide: Putative lung carcinoma-associated protein 10 (164 aa).

Residues 1–164 (MSSCPVHDCP…TQKPQTTVGQ (164 aa)) are disordered. A compositionally biased stretch (low complexity) spans 23 to 40 (GSRGALRLRGGAPGSAAG). A compositionally biased stretch (polar residues) spans 152–164 (MQKTQKPQTTVGQ).

This Homo sapiens (Human) protein is Putative lung carcinoma-associated protein 10 (LCA10).